The chain runs to 393 residues: MKRPVTGKDLMIVNMGPHHPSMHGVLRLIVTLDGEDVVDCEPILGYLHRGMEKIAENRAIIQYLPYVTRWDYLATMFTEAITVNGPEQLGNIQVPKRASYIRVIMLELSRIASHLLWLGPFMADIGAQTPFFYIFREREFVYDLFEAATGMRMMHNFFRIGGIAADLPYGWIDKCLDFCDYFLTEVVEYQKLITRNPIFLERVEGVGIVGGEEAINWGLSGPMLRASGIPWDLRKVDRYESYDEFEWEIQWQKQGDSLARYLVRLSEMTESIKIIQQALEGLPGGPYENLESRGFDRKRNPEWNDFEYRFISKKPSPTFELSKQELYVRVEAPKGELGIFLIGDQSGFPWRWKIRPPGFINLQILPELVKRMKLADIMTILGSIDIIMGEVDR.

Belongs to the complex I 49 kDa subunit family. As to quaternary structure, NDH is composed of at least 16 different subunits, 5 of which are encoded in the nucleus.

The protein localises to the plastid. It is found in the chloroplast thylakoid membrane. The enzyme catalyses a plastoquinone + NADH + (n+1) H(+)(in) = a plastoquinol + NAD(+) + n H(+)(out). It carries out the reaction a plastoquinone + NADPH + (n+1) H(+)(in) = a plastoquinol + NADP(+) + n H(+)(out). NDH shuttles electrons from NAD(P)H:plastoquinone, via FMN and iron-sulfur (Fe-S) centers, to quinones in the photosynthetic chain and possibly in a chloroplast respiratory chain. The immediate electron acceptor for the enzyme in this species is believed to be plastoquinone. Couples the redox reaction to proton translocation, and thus conserves the redox energy in a proton gradient. The chain is NAD(P)H-quinone oxidoreductase subunit H, chloroplastic from Barbarea verna (Land cress).